A 135-amino-acid polypeptide reads, in one-letter code: Small ribosomal subunit protein uS12 (135 aa).

The segment at 1–24 (MPTINQLVRKGRHSKTTKSKSPAL) is disordered. The span at 9-18 (RKGRHSKTTK) shows a compositional bias: basic residues. D102 is subject to 3-methylthioaspartic acid.

This sequence belongs to the universal ribosomal protein uS12 family. In terms of assembly, part of the 30S ribosomal subunit. Contacts proteins S8 and S17. May interact with IF1 in the 30S initiation complex.

Functionally, with S4 and S5 plays an important role in translational accuracy. Its function is as follows. Interacts with and stabilizes bases of the 16S rRNA that are involved in tRNA selection in the A site and with the mRNA backbone. Located at the interface of the 30S and 50S subunits, it traverses the body of the 30S subunit contacting proteins on the other side and probably holding the rRNA structure together. The combined cluster of proteins S8, S12 and S17 appears to hold together the shoulder and platform of the 30S subunit. In Lactobacillus delbrueckii subsp. bulgaricus (strain ATCC 11842 / DSM 20081 / BCRC 10696 / JCM 1002 / NBRC 13953 / NCIMB 11778 / NCTC 12712 / WDCM 00102 / Lb 14), this protein is Small ribosomal subunit protein uS12.